We begin with the raw amino-acid sequence, 536 residues long: Austinoid biosynthesis cluster protein W (536 aa).

The N-terminal stretch at 1-19 (MKHPTVALLGVGMLGCAAA) is a signal peptide. 5 disordered regions span residues 141–164 (GSAP…PGFP), 185–220 (SLPG…PGFS), 261–302 (FGVP…ASNG), 385–423 (PGSA…ASNG), and 491–536 (PSPT…SSAE). The span at 195 to 208 (SGPSQAAAAPSTGD) shows a compositional bias: low complexity. Positions 209 to 220 (SGSGLPGSPGFS) are enriched in gly residues. 2 stretches are compositionally biased toward low complexity: residues 287–302 (AGNA…ASNG) and 408–423 (AGNA…ASNG).

Its pathway is secondary metabolite biosynthesis; terpenoid biosynthesis. Its function is as follows. Part of the gene cluster that mediates the biosynthesis of calidodehydroaustin, a fungal meroterpenoid. The first step of the pathway is the synthesis of 3,5-dimethylorsellinic acid by the polyketide synthase ausA. 3,5-dimethylorsellinic acid is then prenylated by the polyprenyl transferase ausN. Further epoxidation by the FAD-dependent monooxygenase ausM and cyclization by the probable terpene cyclase ausL lead to the formation of protoaustinoid A. Protoaustinoid A is then oxidized to spiro-lactone preaustinoid A3 by the combined action of the FAD-binding monooxygenases ausB and ausC, and the dioxygenase ausE. Acid-catalyzed keto-rearrangement and ring contraction of the tetraketide portion of preaustinoid A3 by ausJ lead to the formation of preaustinoid A4. The aldo-keto reductase ausK, with the help of ausH, is involved in the next step by transforming preaustinoid A4 into isoaustinone which is in turn hydroxylated by the P450 monooxygenase ausI to form austinolide. The cytochrome P450 monooxygenase ausG modifies austinolide to austinol. Austinol is further acetylated to austin by the O-acetyltransferase ausP, which spontaneously changes to dehydroaustin. The cytochrome P450 monooxygenase ausR then converts dehydroaustin is into 7-dehydrodehydroaustin. The hydroxylation catalyzed by ausR permits the O-acetyltransferase ausQ to add an additional acetyl group to the molecule, leading to the formation of acetoxydehydroaustin. The short chain dehydrogenase ausT catalyzes the reduction of the double bond present between carbon atoms 1 and 2 to convert 7-dehydrodehydroaustin into 1,2-dihydro-7-hydroxydehydroaustin. AusQ catalyzes not only an acetylation reaction but also the addition of the PKS ausV diketide product to 1,2-dihydro-7-hydroxydehydroaustin, forming precalidodehydroaustin. Finally, the iron/alpha-ketoglutarate-dependent dioxygenase converts precalidodehydroaustin into calidodehydroaustin. In Aspergillus calidoustus, this protein is Austinoid biosynthesis cluster protein W.